A 703-amino-acid polypeptide reads, in one-letter code: Leucine zipper putative tumor suppressor 3 (703 aa).

Disordered regions lie at residues 1–22, 40–190, and 204–347; these read MAPA…PHLF, RADP…SEPL, and FHSM…PPSP. Over residues 96 to 107 the composition is skewed to low complexity; that stretch reads GSFPGPRSSGSG. A compositionally biased stretch (basic and acidic residues) spans 109-124; it reads NRERPGPGRYPSEDKV. Residues 205-218 show a composition bias toward polar residues; it reads HSMQNLCPPQTNGT. Over residues 251–268 the composition is skewed to low complexity; sequence DSGRNSLTSLPTYSSSYS. Residues 290 to 299 are compositionally biased toward gly residues; the sequence is SSGGGGGGSG. A compositionally biased stretch (low complexity) spans 304-324; sequence GTSDSGRASSKSGSSSSMGRS. Residues 325–336 are compositionally biased toward gly residues; the sequence is GHLGSGEGGNGG. Residues Ser346 and Ser348 each carry the phosphoserine modification. Coiled coils occupy residues 348–526 and 600–669; these read SALI…SLRD and TRAL…RLRE. Residues 665–703 form a disordered region; it reads RRLRERGAAGGSRTPTPQHGEEEKAWTPSRLERIESTEI. Positions 683 to 703 are enriched in basic and acidic residues; sequence HGEEEKAWTPSRLERIESTEI.

Belongs to the LZTS3 family. In terms of assembly, interacts (via C-terminus) with SHANK3 (via PDZ domain). Interacts (via coiled coil) with SIPA1L1. Can form homooligomers. As to expression, detected in brain, with highest expression in brain cortex, caudate putamen, cerebellum and hippocampus. Detected in neuropil (at protein level). Detected in brain and kidney.

The protein resides in the synapse. The protein localises to the postsynaptic density. It localises to the cell projection. It is found in the dendritic spine. Its subcellular location is the dendrite. The protein resides in the cytoplasm. The protein localises to the cytoskeleton. Functionally, may be involved in promoting the maturation of dendritic spines, probably via regulating SIPA1L1 levels at the postsynaptic density of synapses. This chain is Leucine zipper putative tumor suppressor 3, found in Rattus norvegicus (Rat).